Here is a 90-residue protein sequence, read N- to C-terminus: Acylphosphatase (90 aa).

The region spanning 3–89 (ALKIRVEGIV…EGYEDFTIKY (87 aa)) is the Acylphosphatase-like domain. Residues Arg-18 and Asn-36 contribute to the active site.

This sequence belongs to the acylphosphatase family.

The enzyme catalyses an acyl phosphate + H2O = a carboxylate + phosphate + H(+). In Thermotoga maritima (strain ATCC 43589 / DSM 3109 / JCM 10099 / NBRC 100826 / MSB8), this protein is Acylphosphatase (acyP).